We begin with the raw amino-acid sequence, 640 residues long: 1-deoxy-D-xylulose-5-phosphate synthase (640 aa).

Residues histidine 78 and 119–121 (GHS) each bind thiamine diphosphate. Residue aspartate 151 coordinates Mg(2+). Thiamine diphosphate-binding positions include 152-153 (GA), asparagine 180, tyrosine 289, and glutamate 371. Asparagine 180 contributes to the Mg(2+) binding site.

The protein belongs to the transketolase family. DXPS subfamily. In terms of assembly, homodimer. The cofactor is Mg(2+). Requires thiamine diphosphate as cofactor.

The catalysed reaction is D-glyceraldehyde 3-phosphate + pyruvate + H(+) = 1-deoxy-D-xylulose 5-phosphate + CO2. It functions in the pathway metabolic intermediate biosynthesis; 1-deoxy-D-xylulose 5-phosphate biosynthesis; 1-deoxy-D-xylulose 5-phosphate from D-glyceraldehyde 3-phosphate and pyruvate: step 1/1. Its function is as follows. Catalyzes the acyloin condensation reaction between C atoms 2 and 3 of pyruvate and glyceraldehyde 3-phosphate to yield 1-deoxy-D-xylulose-5-phosphate (DXP). This Bartonella quintana (strain Toulouse) (Rochalimaea quintana) protein is 1-deoxy-D-xylulose-5-phosphate synthase.